The chain runs to 197 residues: Imidazoleglycerol-phosphate dehydratase (197 aa).

It belongs to the imidazoleglycerol-phosphate dehydratase family.

The protein localises to the cytoplasm. It carries out the reaction D-erythro-1-(imidazol-4-yl)glycerol 3-phosphate = 3-(imidazol-4-yl)-2-oxopropyl phosphate + H2O. The protein operates within amino-acid biosynthesis; L-histidine biosynthesis; L-histidine from 5-phospho-alpha-D-ribose 1-diphosphate: step 6/9. This Novosphingobium aromaticivorans (strain ATCC 700278 / DSM 12444 / CCUG 56034 / CIP 105152 / NBRC 16084 / F199) protein is Imidazoleglycerol-phosphate dehydratase.